Here is a 483-residue protein sequence, read N- to C-terminus: MTVVSCEIQDETVVVSPLYQDDCDEERGDQECSERVVINISGLRFETQLRTLSRFPTTLLGDPRKRMRFFDPLRNEYFFDRNRPSFDAILYYYQSGGKLRRPVNVTMDIFMEEMTFYEIEEEAIDMFKEDEGMIIEVERAMPDNEFQRQLWLLFEYPESSGPARMIAVVSVSVIVISIVIFCLETLPQFREDTSANLPLSNHHTTNGTTLHKKPNLFTDPFFMVETLCIVWFSFEFLVRFLSCPSKPAFFKNAMNSIDILAIAPYFITLGLELAEQQEAGSEQAMSLAILRVIRLVRVFRIFKLSRHSKGLQILGQTLHASISELGLLIFFLLIGVILFSSAVYFAEADDPESGFSSIPAAFWWAVVSMTTVGYGDMCPVTIGGKIVGSMCAIAGVLTIALPVPVIVSNFNYFYHRERNDEETAVYTHVTCGQQNASFGEFKSTSDSRQSLTKSEDTEEDSCETIRLTHFNPFEHYTGKLTDV.

Residues 1 to 165 (MTVVSCEIQD…YPESSGPARM (165 aa)) are Cytoplasmic-facing. The chain crosses the membrane as a helical span at residues 166–186 (IAVVSVSVIVISIVIFCLETL). Over 187–220 (PQFREDTSANLPLSNHHTTNGTTLHKKPNLFTDP) the chain is Extracellular. Residues 221-241 (FFMVETLCIVWFSFEFLVRFL) traverse the membrane as a helical segment. The Cytoplasmic portion of the chain corresponds to 242–252 (SCPSKPAFFKN). Cysteine 243 carries S-palmitoyl cysteine lipidation. A helical transmembrane segment spans residues 253-273 (AMNSIDILAIAPYFITLGLEL). The Extracellular segment spans residues 274-324 (AEQQEAGSEQAMSLAILRVIRLVRVFRIFKLSRHSKGLQILGQTLHASISE). Residues 325 to 345 (LGLLIFFLLIGVILFSSAVYF) traverse the membrane as a helical; Voltage-sensor segment. The Cytoplasmic portion of the chain corresponds to 346–353 (AEADDPES). The helical transmembrane segment at 354–374 (GFSSIPAAFWWAVVSMTTVGY) threads the bilayer. Positions 371 to 376 (TVGYGD) match the Selectivity filter motif. The Extracellular segment spans residues 375–385 (GDMCPVTIGGK). A helical membrane pass occupies residues 386–406 (IVGSMCAIAGVLTIALPVPVI). Topologically, residues 407–483 (VSNFNYFYHR…EHYTGKLTDV (77 aa)) are cytoplasmic. Phosphotyrosine is present on tyrosine 426. Threonine 430 bears the Phosphothreonine mark. A compositionally biased stretch (polar residues) spans 440–452 (EFKSTSDSRQSLT). The tract at residues 440–459 (EFKSTSDSRQSLTKSEDTEE) is disordered. A PDZ-binding motif is present at residues 481 to 483 (TDV).

It belongs to the potassium channel family. A (Shaker) (TC 1.A.1.2) subfamily. In terms of assembly, heterotetramer of potassium channel proteins. Binds PDZ domains of dlg1, dlg2 and dlg4. In terms of tissue distribution, expressed in oligodendrocytes and astrocytes.

It is found in the membrane. Functionally, mediates the voltage-dependent potassium ion permeability of excitable membranes. Assuming opened or closed conformations in response to the voltage difference across the membrane, the protein forms a potassium-selective channel through which potassium ions may pass in accordance with their electrochemical gradient. The protein is Shaker-related potassium channel tsha2 of Oncorhynchus mykiss (Rainbow trout).